Here is a 362-residue protein sequence, read N- to C-terminus: Peptide chain release factor 1 (362 aa).

Q238 bears the N5-methylglutamine mark.

The protein belongs to the prokaryotic/mitochondrial release factor family. Post-translationally, methylated by PrmC. Methylation increases the termination efficiency of RF1.

It is found in the cytoplasm. Its function is as follows. Peptide chain release factor 1 directs the termination of translation in response to the peptide chain termination codons UAG and UAA. The polypeptide is Peptide chain release factor 1 (Psychrobacter cryohalolentis (strain ATCC BAA-1226 / DSM 17306 / VKM B-2378 / K5)).